Reading from the N-terminus, the 263-residue chain is Endonuclease 8 (263 aa).

The active-site Schiff-base intermediate with DNA is proline 2. Glutamate 3 serves as the catalytic Proton donor. The active-site Proton donor; for beta-elimination activity is the lysine 53. Positions 70, 125, and 169 each coordinate DNA. Residues 229 to 263 (KVFHRDGEACERCGGIIEKTTLSSRPFYWCPHCQK) form an FPG-type zinc finger. Arginine 253 (proton donor; for delta-elimination activity) is an active-site residue.

It belongs to the FPG family. Requires Zn(2+) as cofactor.

The catalysed reaction is 2'-deoxyribonucleotide-(2'-deoxyribose 5'-phosphate)-2'-deoxyribonucleotide-DNA = a 3'-end 2'-deoxyribonucleotide-(2,3-dehydro-2,3-deoxyribose 5'-phosphate)-DNA + a 5'-end 5'-phospho-2'-deoxyribonucleoside-DNA + H(+). In terms of biological role, involved in base excision repair of DNA damaged by oxidation or by mutagenic agents. Acts as a DNA glycosylase that recognizes and removes damaged bases. Has a preference for oxidized pyrimidines, such as thymine glycol, 5,6-dihydrouracil and 5,6-dihydrothymine. Has AP (apurinic/apyrimidinic) lyase activity and introduces nicks in the DNA strand. Cleaves the DNA backbone by beta-delta elimination to generate a single-strand break at the site of the removed base with both 3'- and 5'-phosphates. This Salmonella arizonae (strain ATCC BAA-731 / CDC346-86 / RSK2980) protein is Endonuclease 8.